Here is a 204-residue protein sequence, read N- to C-terminus: Urease accessory protein UreG (204 aa).

Position 10–17 (10–17) interacts with GTP; sequence GPVGAGKT.

It belongs to the SIMIBI class G3E GTPase family. UreG subfamily. In terms of assembly, homodimer. UreD, UreF and UreG form a complex that acts as a GTP-hydrolysis-dependent molecular chaperone, activating the urease apoprotein by helping to assemble the nickel containing metallocenter of UreC. The UreE protein probably delivers the nickel.

It is found in the cytoplasm. Functionally, facilitates the functional incorporation of the urease nickel metallocenter. This process requires GTP hydrolysis, probably effectuated by UreG. The protein is Urease accessory protein UreG of Bacillus sp. (strain TB-90).